A 183-amino-acid chain; its full sequence is MKTINFITGNKNKLAEVQAILGDTIEVQNRAIDVPEIQGSIEEIAKEKCRKAAETVQGPALTEDTALEFNALKGLPGPYIKWFLEALGHDGLNKLLDPYEDKSIVAVCTFAFSSGPGAEPIIFQGKTEGRMVPARGLAKFGWDPIFEYEGNTFAEMDKDEKNLISHRYKALAKLKQWLAETYP.

An ITP-binding site is contributed by Thr-8 to Lys-13. Position 36 (Glu-36) interacts with Mg(2+). ITP contacts are provided by residues Lys-48, Asp-64–Thr-65, Lys-81, Phe-140–Asp-143, Lys-161, and His-166–Arg-167.

It belongs to the HAM1 NTPase family. As to quaternary structure, homodimer. Mg(2+) is required as a cofactor. It depends on Mn(2+) as a cofactor.

The protein localises to the cytoplasm. Its subcellular location is the nucleus. It catalyses the reaction ITP + H2O = IMP + diphosphate + H(+). It carries out the reaction dITP + H2O = dIMP + diphosphate + H(+). The catalysed reaction is XTP + H2O = XMP + diphosphate + H(+). In terms of biological role, pyrophosphatase that hydrolyzes non-canonical purine nucleotides such as inosine triphosphate (ITP), deoxyinosine triphosphate (dITP) or xanthosine 5'-triphosphate (XTP) to their respective monophosphate derivatives. The enzyme does not distinguish between the deoxy- and ribose forms. Probably excludes non-canonical purines from RNA and DNA precursor pools, thus preventing their incorporation into RNA and DNA and avoiding chromosomal lesions. This chain is Inosine triphosphate pyrophosphatase, found in Ajellomyces capsulatus (strain G186AR / H82 / ATCC MYA-2454 / RMSCC 2432) (Darling's disease fungus).